A 410-amino-acid polypeptide reads, in one-letter code: Diguanylate cyclase DgcM (410 aa).

PAS domains are found at residues 3 to 70 and 129 to 198; these read THNF…NQHD and GFYA…HLPG. Positions 199–251 constitute a PAC domain; that stretch reads GHKPLNFVHKLADGSTRHVQTYAGPIEIYGDKLMLCIVHDITEQKRLEEQLEH. One can recognise a GGDEF domain in the interval 283–410; that stretch reads QDYSLLLIDT…NDGRNRVLAA (128 aa). Aspartate 291 is a binding site for Mg(2+). Residues asparagine 299, histidine 304, and aspartate 308 each coordinate substrate. Glutamate 334 serves as a coordination point for Mg(2+). The active-site Proton acceptor is glutamate 334.

Forms homodimers and homotetramers. Interacts with PdeR and MlrA. Mg(2+) serves as cofactor.

It carries out the reaction 2 GTP = 3',3'-c-di-GMP + 2 diphosphate. It functions in the pathway purine metabolism; 3',5'-cyclic di-GMP biosynthesis. Activity is inhibited by the phosphodiesterase PdeR. Inhibition is relieved by high cellular c-di-GMP levels. In terms of biological role, part of a signaling cascade that regulates curli biosynthesis. The cascade is composed of two cyclic-di-GMP (c-di-GMP) control modules, in which c-di-GMP controlled by the DgcE/PdeH pair (module I) regulates the activity of the DgcM/PdeR pair (module II), which in turn regulates activity of the transcription factor MlrA and expression of the master biofilm regulator csgD. DgcM stimulates activity of MlrA by direct interaction, leading to the transcription of csgD. It also catalyzes the synthesis of c-di-GMP via the condensation of 2 GTP molecules, which contributes to the c-di-GMP pool generated by module I in a positive feedback loop. Production of c-di-GMP contributes to but is not essential for MlrA activation. This Escherichia coli (strain K12) protein is Diguanylate cyclase DgcM.